The chain runs to 311 residues: tRNA dimethylallyltransferase 2 (311 aa).

15–22 is a binding site for ATP; sequence GPTAVGKT. A substrate-binding site is contributed by 17–22; the sequence is TAVGKT. Residues 40-43 are interaction with substrate tRNA; it reads DSMQ.

Belongs to the IPP transferase family. Monomer. It depends on Mg(2+) as a cofactor.

It carries out the reaction adenosine(37) in tRNA + dimethylallyl diphosphate = N(6)-dimethylallyladenosine(37) in tRNA + diphosphate. Functionally, catalyzes the transfer of a dimethylallyl group onto the adenine at position 37 in tRNAs that read codons beginning with uridine, leading to the formation of N6-(dimethylallyl)adenosine (i(6)A). This is tRNA dimethylallyltransferase 2 from Syntrophus aciditrophicus (strain SB).